We begin with the raw amino-acid sequence, 247 residues long: Carboxy-S-adenosyl-L-methionine synthase (247 aa).

Residues Tyr40, Gly65–Ser67, Asp90–Asn91, Asp122–Ile123, Asn137, and Arg204 contribute to the S-adenosyl-L-methionine site.

The protein belongs to the class I-like SAM-binding methyltransferase superfamily. Cx-SAM synthase family. In terms of assembly, homodimer.

It carries out the reaction prephenate + S-adenosyl-L-methionine = carboxy-S-adenosyl-L-methionine + 3-phenylpyruvate + H2O. Functionally, catalyzes the conversion of S-adenosyl-L-methionine (SAM) to carboxy-S-adenosyl-L-methionine (Cx-SAM). The protein is Carboxy-S-adenosyl-L-methionine synthase of Pseudomonas putida (strain ATCC 700007 / DSM 6899 / JCM 31910 / BCRC 17059 / LMG 24140 / F1).